The following is a 304-amino-acid chain: Methionyl-tRNA formyltransferase (304 aa).

A (6S)-5,6,7,8-tetrahydrofolate-binding site is contributed by 110–113 (SLLP).

Belongs to the Fmt family.

It carries out the reaction L-methionyl-tRNA(fMet) + (6R)-10-formyltetrahydrofolate = N-formyl-L-methionyl-tRNA(fMet) + (6S)-5,6,7,8-tetrahydrofolate + H(+). Attaches a formyl group to the free amino group of methionyl-tRNA(fMet). The formyl group appears to play a dual role in the initiator identity of N-formylmethionyl-tRNA by promoting its recognition by IF2 and preventing the misappropriation of this tRNA by the elongation apparatus. The polypeptide is Methionyl-tRNA formyltransferase (Gluconobacter oxydans (strain 621H) (Gluconobacter suboxydans)).